The following is a 316-amino-acid chain: MATMKIPMTVPSPRVDADQLFKAFKGRGCDTSVIINILAHRNATQRALIEQEYETKFSDDLRKRLHSELHGHLKKAVLLWMPEAVERDASILKRSLRGAVTDHKAIAEIICTRSGSQLRQIKQVYSNTFGVKLEEDIESEASGNHKRVLLAYLNTTRYEGPEIDNASVENDARTLKSAVARKHKSDDQTLIQIFTDRSRTHLVAVRSTYRSMYGKELGKAIRDETRGNFEHVLLTILQCAENSCFYFAKALRKSMKGLGTDDTALIRIVVTRAEVDMQFIITEYRKRYKKTLYNAVHSDTTSHYRTFLLSLLGPNV.

Alanine 2 carries the post-translational modification N-acetylalanine. Annexin repeat units lie at residues 11–82 (PSPR…LWMP), 83–154 (EAVE…AYLN), 166–238 (ASVE…TILQ), and 242–313 (NSCF…SLLG). The Ca(2+) site is built by phenylalanine 24, glycine 26, glycine 28, and glutamate 68. Position 95 is a phosphoserine (serine 95). A Phosphothreonine modification is found at threonine 112. Ca(2+) is bound at residue glycine 259. Tyrosine 284 bears the Phosphotyrosine mark. The Ca(2+) site is built by aspartate 299 and threonine 300.

The protein belongs to the annexin (TC 1.A.31.1) family. In terms of tissue distribution, expressed mainly in roots and flowers. Lower in stems and leaves.

The protein is Annexin D5 (ANN5) of Arabidopsis thaliana (Mouse-ear cress).